A 456-amino-acid chain; its full sequence is Phosphatidylinositol N-acetylglucosaminyltransferase gpi3 subunit (456 aa).

Belongs to the glycosyltransferase group 1 family. Glycosyltransferase 4 subfamily. Component of a Phosphatidylinositol N-acetylglucosaminyltransferase complex.

It carries out the reaction a 1,2-diacyl-sn-glycero-3-phospho-(1D-myo-inositol) + UDP-N-acetyl-alpha-D-glucosamine = a 6-(N-acetyl-alpha-D-glucosaminyl)-1-(1,2-diacyl-sn-glycero-3-phospho)-1D-myo-inositol + UDP + H(+). It functions in the pathway glycolipid biosynthesis; glycosylphosphatidylinositol-anchor biosynthesis. In terms of biological role, catalytic subunit in the complex catalyzing the transfer of N-acetylglucosamine from UDP-N-acetylglucosamine to phosphatidylinositol, the first step of GPI biosynthesis. This is Phosphatidylinositol N-acetylglucosaminyltransferase gpi3 subunit (gpi3) from Schizosaccharomyces pombe (strain 972 / ATCC 24843) (Fission yeast).